The chain runs to 431 residues: Adenylosuccinate synthetase (431 aa).

GTP-binding positions include 12-18 (GDEGKGK) and 40-42 (GHT). Catalysis depends on aspartate 13, which acts as the Proton acceptor. Residues aspartate 13 and glycine 40 each coordinate Mg(2+). IMP-binding positions include 13-16 (DEGK), 38-41 (NAGH), threonine 131, arginine 145, glutamine 225, threonine 240, and arginine 304. Residue histidine 41 is the Proton donor of the active site. Residue 300–306 (TNTGRRR) coordinates substrate. GTP is bound by residues arginine 306, 332 to 334 (KLD), and 414 to 416 (STS).

It belongs to the adenylosuccinate synthetase family. In terms of assembly, homodimer. Requires Mg(2+) as cofactor.

It localises to the cytoplasm. The catalysed reaction is IMP + L-aspartate + GTP = N(6)-(1,2-dicarboxyethyl)-AMP + GDP + phosphate + 2 H(+). It functions in the pathway purine metabolism; AMP biosynthesis via de novo pathway; AMP from IMP: step 1/2. Its function is as follows. Plays an important role in the de novo pathway of purine nucleotide biosynthesis. Catalyzes the first committed step in the biosynthesis of AMP from IMP. This Methylocella silvestris (strain DSM 15510 / CIP 108128 / LMG 27833 / NCIMB 13906 / BL2) protein is Adenylosuccinate synthetase.